Consider the following 247-residue polypeptide: Ribonuclease PH (247 aa).

Residues Arg-96 and 134–136 (GTR) each bind phosphate.

The protein belongs to the RNase PH family. Homohexameric ring arranged as a trimer of dimers.

The enzyme catalyses tRNA(n+1) + phosphate = tRNA(n) + a ribonucleoside 5'-diphosphate. Functionally, phosphorolytic 3'-5' exoribonuclease that plays an important role in tRNA 3'-end maturation. Removes nucleotide residues following the 3'-CCA terminus of tRNAs; can also add nucleotides to the ends of RNA molecules by using nucleoside diphosphates as substrates, but this may not be physiologically important. Probably plays a role in initiation of 16S rRNA degradation (leading to ribosome degradation) during starvation. This chain is Ribonuclease PH, found in Tropheryma whipplei (strain TW08/27) (Whipple's bacillus).